The chain runs to 286 residues: Bifunctional protein FolD (286 aa).

NADP(+)-binding positions include 165–167 (GRS), serine 190, and valine 231.

The protein belongs to the tetrahydrofolate dehydrogenase/cyclohydrolase family. Homodimer.

The enzyme catalyses (6R)-5,10-methylene-5,6,7,8-tetrahydrofolate + NADP(+) = (6R)-5,10-methenyltetrahydrofolate + NADPH. The catalysed reaction is (6R)-5,10-methenyltetrahydrofolate + H2O = (6R)-10-formyltetrahydrofolate + H(+). It participates in one-carbon metabolism; tetrahydrofolate interconversion. In terms of biological role, catalyzes the oxidation of 5,10-methylenetetrahydrofolate to 5,10-methenyltetrahydrofolate and then the hydrolysis of 5,10-methenyltetrahydrofolate to 10-formyltetrahydrofolate. The chain is Bifunctional protein FolD from Bacillus anthracis (strain A0248).